A 240-amino-acid polypeptide reads, in one-letter code: MNKNVVIKSLAALTILTSVTGIGTTLVEEVQQTAKAENNVTKVKDTNIFPYTGVVAFKSATGFVVGKNTILTNKHVSKNYKVGDRITAHPNSDKGNGGIYSIKKIINYPGKEDVSVIQVEERAIERGPKGFNFNDNVTPFKYAAGAKAGERIKVIGYPHPYKNKYVLYESTGPVMSVEGSSIVYSAHTESGNSGSPVLNSNNELVGIHFASDVKNDDNRNAYGVYFTPEIKKFIAENIDK.

A signal peptide spans methionine 1–alanine 36. Catalysis depends on charge relay system residues histidine 75, aspartate 113, and serine 193.

It belongs to the peptidase S1B family.

The protein resides in the secreted. Serine protease that cleaves specifically after the sequence Trp-Glu-Leu-Gln. This is Serine protease SplB (splB) from Staphylococcus aureus (strain USA300).